The sequence spans 194 residues: PBAN-type neuropeptides (194 aa).

The N-terminal stretch at 1-23 is a signal peptide; the sequence is MFNQTQLFVFLAVFTTSSVLGNN. The residue at position 47 (L47) is a Leucine amide. Residues 51–94 constitute a propeptide that is removed on maturation; the sequence is SLRISTEDNRQAFFKLLEAADALKYYYDQLPYEMQADEPETRVT. Residues L103, L123, L159, and L169 each carry the leucine amide modification. The propeptide occupies 172-194; that stretch reads ELSYDMMPNKIRVVRSTNKTRST.

The protein belongs to the pyrokinin family. Expressed in the subesophageal ganglions. Not found in corpora cardiaca, corpora allata and thoracic ganglia.

The protein resides in the secreted. Its function is as follows. A hormone that controls sex pheromone production in females and pheromone responsiveness in male. Also mediates visceral muscle contractile activity (myotropic activity). The chain is PBAN-type neuropeptides from Helicoverpa zea (Corn earworm moth).